The sequence spans 837 residues: V-type proton ATPase 116 kDa subunit a 1 (837 aa).

Residues 1 to 388 are Cytoplasmic-facing; sequence MGELFRSEEM…DAYGIGTYRE (388 aa). 2 positions are modified to phosphothreonine: T250 and T360. Residue Y364 is modified to Phosphotyrosine. The helical transmembrane segment at 389–407 threads the bilayer; it reads INPAPYTIITFPFLFAVMF. Residues 408–409 are Vacuolar-facing; it reads GD. A helical transmembrane segment spans residues 410 to 426; it reads FGHGILMTLFAVWMVLR. The Cytoplasmic segment spans residues 427–441; it reads ESRILSQKNENEMFS. A helical transmembrane segment spans residues 442-471; it reads TVFSGRYIILLMGVFSMYTGLIYNDCFSKS. The Vacuolar segment spans residues 472–534; sequence LNIFGSSWSV…ATNKLTFLNS (63 aa). The chain crosses the membrane as a helical span at residues 535-554; it reads FKMKMSVILGIIHMLFGVSL. Residues 555-572 lie on the Cytoplasmic side of the membrane; sequence SLFNHIYFKKPLNIYFGF. Residues 573–593 traverse the membrane as a helical segment; the sequence is IPEIIFMTSLFGYLVILIFYK. At 594-638 the chain is on the vacuolar side; the sequence is WTAYDAHTSENAPSLLIHFINMFLFSYPESGYSMLYSGQKGIQCF. Residues 639–658 traverse the membrane as a helical segment; sequence LVVVALLCVPWMLLFKPLVL. Residues 659–724 lie on the Cytoplasmic side of the membrane; it reads RRQYLRRKHL…ATMVHQAIHT (66 aa). Residues 725-749 traverse the membrane as a helical segment; it reads IEYCLGCISNTASYLRLWALSLAHA. At 750–770 the chain is on the vacuolar side; that stretch reads QLSEVLWTMVIHIGLSVKSLA. Residues 771–809 form a helical membrane-spanning segment; it reads GGLVLFFFFTAFATLTVAILLIMEGLSAFLHALRLHWVE. At 810 to 837 the chain is on the cytoplasmic side; sequence FQNKFYSGTGFKFLPFSFEHIREGKFGE.

Belongs to the V-ATPase 116 kDa subunit family. V-ATPase is a heteromultimeric enzyme made up of two complexes: the ATP-hydrolytic V1 complex and the proton translocation V0 complex. The V1 complex consists of three catalytic AB heterodimers that form a heterohexamer, three peripheral stalks each consisting of EG heterodimers, one central rotor including subunits D and F, and the regulatory subunits C and H. The proton translocation complex V0 consists of the proton transport subunit a, a ring of proteolipid subunits c9c'', rotary subunit d, subunits e and f, and the accessory subunits ATP6AP1/Ac45 and ATP6AP2/PRR. Interacts with SPAAR.

Its subcellular location is the cytoplasmic vesicle. The protein resides in the clathrin-coated vesicle membrane. The protein localises to the secretory vesicle. It is found in the synaptic vesicle membrane. It localises to the melanosome. Functionally, subunit of the V0 complex of vacuolar(H+)-ATPase (V-ATPase), a multisubunit enzyme composed of a peripheral complex (V1) that hydrolyzes ATP and a membrane integral complex (V0) that translocates protons. V-ATPase is responsible for the acidification of various organelles, such as lysosomes, endosomes, the trans-Golgi network, and secretory granules, including synaptic vesicles. In certain cell types, can be exported to the plasma membrane, where it is involved in the acidification of the extracellular environment. Required for assembly and activity of the vacuolar ATPase. Through its action on compartment acidification, plays an essential role in neuronal development in terms of integrity and connectivity of neurons. This is V-type proton ATPase 116 kDa subunit a 1 (ATP6V0A1) from Pongo abelii (Sumatran orangutan).